We begin with the raw amino-acid sequence, 112 residues long: UPF0482 protein SG1468 (112 aa).

An N-terminal signal peptide occupies residues 1 to 22 (MNTIPTRCLLGGLLALSLLAYA).

It belongs to the UPF0482 family.

This is UPF0482 protein SG1468 from Sodalis glossinidius (strain morsitans).